Here is a 128-residue protein sequence, read N- to C-terminus: Fluoride-specific ion channel FluC (128 aa).

Transmembrane regions (helical) follow at residues 2-22 (FYSI…RWCL), 35-55 (LGTL…AVVF), 67-87 (LFVI…SVEV), and 96-116 (FGWA…LTAL). 2 residues coordinate Na(+): Gly-75 and Thr-78.

The protein belongs to the fluoride channel Fluc/FEX (TC 1.A.43) family.

It localises to the cell inner membrane. It catalyses the reaction fluoride(in) = fluoride(out). Its activity is regulated as follows. Na(+) is not transported, but it plays an essential structural role and its presence is essential for fluoride channel function. Its function is as follows. Fluoride-specific ion channel. Important for reducing fluoride concentration in the cell, thus reducing its toxicity. This is Fluoride-specific ion channel FluC from Burkholderia cenocepacia (strain ATCC BAA-245 / DSM 16553 / LMG 16656 / NCTC 13227 / J2315 / CF5610) (Burkholderia cepacia (strain J2315)).